A 344-amino-acid polypeptide reads, in one-letter code: Ribosomal RNA large subunit methyltransferase Cfr (344 aa).

Glutamate 88 serves as the catalytic Proton acceptor. The Radical SAM core domain maps to 95–324 (KKGWESFCIS…HANGISVATR (230 aa)). Cysteine 102 and cysteine 335 are disulfide-bonded. [4Fe-4S] cluster is bound by residues cysteine 109, cysteine 113, and cysteine 116. Residues 155–156 (GE), serine 186, 209–211 (SLH), and asparagine 290 contribute to the S-adenosyl-L-methionine site. Cysteine 335 acts as the S-methylcysteine intermediate in catalysis.

The protein belongs to the radical SAM superfamily. RlmN family. Cfr subfamily. [4Fe-4S] cluster is required as a cofactor.

Its subcellular location is the cytoplasm. It carries out the reaction adenosine(2503) in 23S rRNA + 2 reduced [2Fe-2S]-[ferredoxin] + 2 S-adenosyl-L-methionine = 8-methyladenosine(2503) in 23S rRNA + 5'-deoxyadenosine + L-methionine + 2 oxidized [2Fe-2S]-[ferredoxin] + S-adenosyl-L-homocysteine. Its function is as follows. Specifically methylates position 8 of adenine 2503 in 23S rRNA. Confers resistance to some classes of antibiotics. In Lachnoclostridium phytofermentans (strain ATCC 700394 / DSM 18823 / ISDg) (Clostridium phytofermentans), this protein is Ribosomal RNA large subunit methyltransferase Cfr.